A 161-amino-acid polypeptide reads, in one-letter code: Urease accessory protein UreE (161 aa).

This sequence belongs to the UreE family.

Its subcellular location is the cytoplasm. Involved in urease metallocenter assembly. Binds nickel. Probably functions as a nickel donor during metallocenter assembly. This chain is Urease accessory protein UreE, found in Pseudarthrobacter chlorophenolicus (strain ATCC 700700 / DSM 12829 / CIP 107037 / JCM 12360 / KCTC 9906 / NCIMB 13794 / A6) (Arthrobacter chlorophenolicus).